The chain runs to 372 residues: tRNA-specific 2-thiouridylase MnmA (372 aa).

Residues 11–18 (GMSGGVDS) and M37 each bind ATP. The interaction with target base in tRNA stretch occupies residues 97-99 (NPD). Residue C102 is the Nucleophile of the active site. Cysteines 102 and 199 form a disulfide. ATP is bound at residue G126. The segment at 149–151 (KDQ) is interaction with tRNA. The Cysteine persulfide intermediate role is filled by C199. Residues 309-310 (RY) form an interaction with tRNA region.

It belongs to the MnmA/TRMU family.

It localises to the cytoplasm. The enzyme catalyses S-sulfanyl-L-cysteinyl-[protein] + uridine(34) in tRNA + AH2 + ATP = 2-thiouridine(34) in tRNA + L-cysteinyl-[protein] + A + AMP + diphosphate + H(+). Functionally, catalyzes the 2-thiolation of uridine at the wobble position (U34) of tRNA, leading to the formation of s(2)U34. The sequence is that of tRNA-specific 2-thiouridylase MnmA from Staphylococcus aureus (strain bovine RF122 / ET3-1).